We begin with the raw amino-acid sequence, 311 residues long: Pyrimidine-specific ribonucleoside hydrolase RihA (311 aa).

His240 is a catalytic residue.

The protein belongs to the IUNH family. RihA subfamily.

Its function is as follows. Hydrolyzes with equal efficiency cytidine or uridine to ribose and cytosine or uracil, respectively. The sequence is that of Pyrimidine-specific ribonucleoside hydrolase RihA from Escherichia coli O139:H28 (strain E24377A / ETEC).